The following is a 135-amino-acid chain: Transcription antitermination protein NusB (135 aa).

Belongs to the NusB family.

Functionally, involved in transcription antitermination. Required for transcription of ribosomal RNA (rRNA) genes. Binds specifically to the boxA antiterminator sequence of the ribosomal RNA (rrn) operons. The chain is Transcription antitermination protein NusB from Clostridium acetobutylicum (strain ATCC 824 / DSM 792 / JCM 1419 / IAM 19013 / LMG 5710 / NBRC 13948 / NRRL B-527 / VKM B-1787 / 2291 / W).